The following is a 376-amino-acid chain: MADRQRWVIKIGSALLTNDGKGLDCALMQTWVDRMVALRERGIEVVIVSSGAVAEGMTRLGWSARPDSVHELQAAAAVGQMGLVQAWETRFQQHQLHTAQVLLTHDDLSDRKRYLNARSTLLTLLGFGVVPVVNENDTVVTDEIRFGDNDTLAALVANLVEADRLLILTDQEGLFDADPRSNADANLIREARASDPAIVRVAGGGGLLGRGGMATKVRAGKLAARSGAITTIASGRSPEVLIELADGQGPGTTLLPDTTPMNARKQWLAGHLQMRGRLVLDAGAVVRLREGGSSLLPVGVVDVFGQFSRGEMVACEDERGERVGCGLVNYDAADARRICRKKSAEIAGVLGFMNEEELIHRDNLVLMEAGSRVSGA.

K10 is a binding site for ATP. Substrate is bound by residues S50, D137, and N149. 169-170 provides a ligand contact to ATP; that stretch reads TD. The 79-residue stretch at 275-353 folds into the PUA domain; it reads RGRLVLDAGA…AEIAGVLGFM (79 aa).

Belongs to the glutamate 5-kinase family.

It is found in the cytoplasm. The enzyme catalyses L-glutamate + ATP = L-glutamyl 5-phosphate + ADP. Its pathway is amino-acid biosynthesis; L-proline biosynthesis; L-glutamate 5-semialdehyde from L-glutamate: step 1/2. Functionally, catalyzes the transfer of a phosphate group to glutamate to form L-glutamate 5-phosphate. The chain is Glutamate 5-kinase from Alcanivorax borkumensis (strain ATCC 700651 / DSM 11573 / NCIMB 13689 / SK2).